Consider the following 358-residue polypeptide: 3-dehydroquinate synthase (358 aa).

Residues 72–77 (GGERVK), 106–110 (GALLD), 130–131 (ST), Lys-143, and Lys-151 contribute to the NAD(+) site. Residues Glu-184, His-245, and His-261 each contribute to the Zn(2+) site.

This sequence belongs to the sugar phosphate cyclases superfamily. Dehydroquinate synthase family. It depends on NAD(+) as a cofactor. Requires Co(2+) as cofactor. Zn(2+) is required as a cofactor.

The protein localises to the cytoplasm. The enzyme catalyses 7-phospho-2-dehydro-3-deoxy-D-arabino-heptonate = 3-dehydroquinate + phosphate. It functions in the pathway metabolic intermediate biosynthesis; chorismate biosynthesis; chorismate from D-erythrose 4-phosphate and phosphoenolpyruvate: step 2/7. Its function is as follows. Catalyzes the conversion of 3-deoxy-D-arabino-heptulosonate 7-phosphate (DAHP) to dehydroquinate (DHQ). The protein is 3-dehydroquinate synthase (aroB) of Aeropyrum pernix (strain ATCC 700893 / DSM 11879 / JCM 9820 / NBRC 100138 / K1).